The primary structure comprises 252 residues: Small ribosomal subunit protein uS2 (252 aa).

This sequence belongs to the universal ribosomal protein uS2 family. As to quaternary structure, component of the small ribosomal subunit. Mature ribosomes consist of a small (40S) and a large (60S) subunit. The 40S subunit contains about 33 different proteins and 1 molecule of RNA (18S). The 60S subunit contains about 49 different proteins and 3 molecules of RNA (25S, 5.8S and 5S). Interacts with RPS21.

It is found in the cytoplasm. Required for the assembly and/or stability of the 40S ribosomal subunit. Required for the processing of the 20S rRNA-precursor to mature 18S rRNA in a late step of the maturation of 40S ribosomal subunits. The chain is Small ribosomal subunit protein uS2 from Encephalitozoon cuniculi (strain GB-M1) (Microsporidian parasite).